The sequence spans 218 residues: Ribose-5-phosphate isomerase A (218 aa).

Substrate contacts are provided by residues 28 to 31, 81 to 84, and 94 to 97; these read TGST, DGAD, and KGGG. Catalysis depends on Glu103, which acts as the Proton acceptor. A substrate-binding site is contributed by Lys121.

This sequence belongs to the ribose 5-phosphate isomerase family. Homodimer.

The enzyme catalyses aldehydo-D-ribose 5-phosphate = D-ribulose 5-phosphate. It participates in carbohydrate degradation; pentose phosphate pathway; D-ribose 5-phosphate from D-ribulose 5-phosphate (non-oxidative stage): step 1/1. Its function is as follows. Catalyzes the reversible conversion of ribose-5-phosphate to ribulose 5-phosphate. The sequence is that of Ribose-5-phosphate isomerase A from Shewanella woodyi (strain ATCC 51908 / MS32).